A 329-amino-acid chain; its full sequence is GTPase Obg (329 aa).

Residues 1–159 (MQFIDQARIS…WPLQLELKLL (159 aa)) enclose the Obg domain. An OBG-type G domain is found at 160–328 (AEVGIIGLPN…MLDRVWSELG (169 aa)). ATP contacts are provided by residues 166 to 173 (GLPNAGKS), 191 to 195 (FTTLI), 213 to 216 (DIPG), 280 to 283 (NKQE), and 309 to 311 (SAA). Mg(2+) contacts are provided by S173 and T193.

This sequence belongs to the TRAFAC class OBG-HflX-like GTPase superfamily. OBG GTPase family. As to quaternary structure, monomer. The cofactor is Mg(2+).

It localises to the cytoplasm. Functionally, an essential GTPase which binds GTP, GDP and possibly (p)ppGpp with moderate affinity, with high nucleotide exchange rates and a fairly low GTP hydrolysis rate. Plays a role in control of the cell cycle, stress response, ribosome biogenesis and in those bacteria that undergo differentiation, in morphogenesis control. The chain is GTPase Obg from Synechococcus sp. (strain CC9311).